We begin with the raw amino-acid sequence, 81 residues long: Acyl carrier protein (81 aa).

One can recognise a Carrier domain in the interval 3-78; the sequence is QEIFEKVKSI…AAVDYIEKEQ (76 aa). The residue at position 38 (Ser-38) is an O-(pantetheine 4'-phosphoryl)serine.

This sequence belongs to the acyl carrier protein (ACP) family. 4'-phosphopantetheine is transferred from CoA to a specific serine of apo-ACP by AcpS. This modification is essential for activity because fatty acids are bound in thioester linkage to the sulfhydryl of the prosthetic group.

It localises to the cytoplasm. The protein operates within lipid metabolism; fatty acid biosynthesis. Its function is as follows. Carrier of the growing fatty acid chain in fatty acid biosynthesis. This chain is Acyl carrier protein, found in Crocosphaera subtropica (strain ATCC 51142 / BH68) (Cyanothece sp. (strain ATCC 51142)).